Consider the following 322-residue polypeptide: DNA repair and recombination protein RadA (322 aa).

105-112 contacts ATP; the sequence is GMYGSGKT.

It belongs to the eukaryotic RecA-like protein family.

In terms of biological role, involved in DNA repair and in homologous recombination. Binds and assemble on single-stranded DNA to form a nucleoprotein filament. Hydrolyzes ATP in a ssDNA-dependent manner and promotes DNA strand exchange between homologous DNA molecules. This chain is DNA repair and recombination protein RadA, found in Methanococcus maripaludis (strain C5 / ATCC BAA-1333).